A 124-amino-acid chain; its full sequence is NADH-quinone oxidoreductase subunit K (124 aa).

Transmembrane regions (helical) follow at residues 28 to 48, 52 to 72, and 84 to 104; these read MEHGLILAAIIFAIGLCGVMV, FLFMLMSLEIMMSAAGLAFIV, and IMFIFILTLAAAEASLGLAIL.

Belongs to the complex I subunit 4L family. As to quaternary structure, NDH-1 is composed of 14 different subunits. Subunits NuoA, H, J, K, L, M, N constitute the membrane sector of the complex.

It is found in the cell inner membrane. The enzyme catalyses a quinone + NADH + 5 H(+)(in) = a quinol + NAD(+) + 4 H(+)(out). In terms of biological role, NDH-1 shuttles electrons from NADH, via FMN and iron-sulfur (Fe-S) centers, to quinones in the respiratory chain. The immediate electron acceptor for the enzyme in this species is believed to be ubiquinone. Couples the redox reaction to proton translocation (for every two electrons transferred, four hydrogen ions are translocated across the cytoplasmic membrane), and thus conserves the redox energy in a proton gradient. This Psychrobacter sp. (strain PRwf-1) protein is NADH-quinone oxidoreductase subunit K.